The following is a 401-amino-acid chain: Phosphonopyruvate decarboxylase (401 aa).

The tract at residues 382–401 (WPASAVGSGTRAAAGSAGDR) is disordered. Residues 384-401 (ASAVGSGTRAAAGSAGDR) show a composition bias toward low complexity.

Belongs to the TPP enzyme family. Requires thiamine diphosphate as cofactor. The cofactor is Mg(2+).

It carries out the reaction 3-phosphonopyruvate + H(+) = phosphonoacetaldehyde + CO2. The protein operates within secondary metabolite biosynthesis; bialaphos biosynthesis. Functionally, involved in the biosynthesis of phosphinothricin tripeptide (PTT), also known as bialaphos (BA), a natural-product antibiotic and potent herbicide. Catalyzes the decarboxylation of phosphonopyruvate (PnPy) to generate phosphonoacetaldehyde (PnAA). This is Phosphonopyruvate decarboxylase from Streptomyces hygroscopicus.